We begin with the raw amino-acid sequence, 230 residues long: Demethylmenaquinone methyltransferase (230 aa).

S-adenosyl-L-methionine is bound by residues threonine 62, aspartate 80, 100–101 (DA), and serine 117.

It belongs to the class I-like SAM-binding methyltransferase superfamily. MenG/UbiE family.

The enzyme catalyses a 2-demethylmenaquinol + S-adenosyl-L-methionine = a menaquinol + S-adenosyl-L-homocysteine + H(+). It functions in the pathway quinol/quinone metabolism; menaquinone biosynthesis; menaquinol from 1,4-dihydroxy-2-naphthoate: step 2/2. In terms of biological role, methyltransferase required for the conversion of demethylmenaquinol (DMKH2) to menaquinol (MKH2). This chain is Demethylmenaquinone methyltransferase, found in Mycobacterium sp. (strain JLS).